Reading from the N-terminus, the 841-residue chain is Translation initiation factor IF-2 (841 aa).

The segment at 94–255 (QRSPEEIEAE…RNAHGFQSPT (162 aa)) is disordered. The span at 96-135 (SPEEIEAERKREMDERRAVENAARQKAEEEAKRRAEEDAR) shows a compositional bias: basic and acidic residues. Over residues 136–175 (NQPAAGQPASAPAQPVAAAEPVREAPAAAAPAPASAAPSA) the composition is skewed to low complexity. Composition is skewed to basic and acidic residues over residues 176–217 (DARK…EKAP) and 225–234 (TTDEESDSFR). Residues 235–248 (RGGRGKGKLKKRNA) show a composition bias toward basic residues. Residues 341–510 (SRAPVVTVMG…LLQAEVLELK (170 aa)) enclose the tr-type G domain. The tract at residues 350 to 357 (GHVDHGKT) is G1. 350-357 (GHVDHGKT) provides a ligand contact to GTP. The interval 375–379 (GITQH) is G2. Residues 396-399 (DTPG) form a G3 region. Residues 396-400 (DTPGH) and 450-453 (NKID) contribute to the GTP site. A G4 region spans residues 450 to 453 (NKID). The segment at 486-488 (SAK) is G5.

Belongs to the TRAFAC class translation factor GTPase superfamily. Classic translation factor GTPase family. IF-2 subfamily.

It is found in the cytoplasm. One of the essential components for the initiation of protein synthesis. Protects formylmethionyl-tRNA from spontaneous hydrolysis and promotes its binding to the 30S ribosomal subunits. Also involved in the hydrolysis of GTP during the formation of the 70S ribosomal complex. This Pseudomonas syringae pv. tomato (strain ATCC BAA-871 / DC3000) protein is Translation initiation factor IF-2.